The chain runs to 171 residues: Tetratricopeptide repeat protein 9C (171 aa).

TPR repeat units follow at residues A8–L41, T72–N107, and A108–D141.

It belongs to the TTC9 family.

The sequence is that of Tetratricopeptide repeat protein 9C (TTC9C) from Bos taurus (Bovine).